A 334-amino-acid chain; its full sequence is Zinc finger Ran-binding domain-containing protein 2 (334 aa).

RanBP2-type zinc fingers lie at residues 9–40 (SDGD…EKTT) and 65–94 (SAND…PKYA). The interval 117 to 334 (REESDGEYDE…SGSRTSSKKK (218 aa)) is disordered. Residues 150 to 163 (DKESEGEDEEDEDG) show a composition bias toward acidic residues. The segment covering 196–212 (KKKKSNRRSRSKSRSSH) has biased composition (basic residues). Low complexity-rich tracts occupy residues 213 to 224 (SRSSSRSSSHSS) and 258 to 285 (SRSS…SSSP). Over residues 302–318 (RKKRRSRSRSPERRRRS) the composition is skewed to basic residues. Low complexity predominate over residues 319 to 334 (SSGSSHSGSRTSSKKK).

This sequence belongs to the ZRANB2 family.

The protein resides in the nucleus. May regulate alternative splicing by interfering with constitutive 5'-splice site selection. In Gallus gallus (Chicken), this protein is Zinc finger Ran-binding domain-containing protein 2.